The following is a 365-amino-acid chain: uncharacterized protein (365 aa).

31–38 serves as a coordination point for ATP; the sequence is GPINSGKT.

Belongs to the archaeal ATPase family.

This is an uncharacterized protein from Methanocaldococcus jannaschii (strain ATCC 43067 / DSM 2661 / JAL-1 / JCM 10045 / NBRC 100440) (Methanococcus jannaschii).